A 390-amino-acid polypeptide reads, in one-letter code: 4-hydroxy-3-methylbut-2-en-1-yl diphosphate synthase (flavodoxin) (390 aa).

Positions 281, 284, 316, and 323 each coordinate [4Fe-4S] cluster.

It belongs to the IspG family. It depends on [4Fe-4S] cluster as a cofactor.

The enzyme catalyses (2E)-4-hydroxy-3-methylbut-2-enyl diphosphate + oxidized [flavodoxin] + H2O + 2 H(+) = 2-C-methyl-D-erythritol 2,4-cyclic diphosphate + reduced [flavodoxin]. The protein operates within isoprenoid biosynthesis; isopentenyl diphosphate biosynthesis via DXP pathway; isopentenyl diphosphate from 1-deoxy-D-xylulose 5-phosphate: step 5/6. In terms of biological role, converts 2C-methyl-D-erythritol 2,4-cyclodiphosphate (ME-2,4cPP) into 1-hydroxy-2-methyl-2-(E)-butenyl 4-diphosphate. In Salinispora arenicola (strain CNS-205), this protein is 4-hydroxy-3-methylbut-2-en-1-yl diphosphate synthase (flavodoxin).